Here is a 570-residue protein sequence, read N- to C-terminus: Hydroxylamine reductase (570 aa).

Positions 5, 8, 17, and 23 each coordinate [4Fe-4S] cluster. The hybrid [4Fe-2O-2S] cluster site is built by His266, Glu290, Cys334, Cys425, Cys453, Cys478, Glu513, and Lys515. At Cys425 the chain carries Cysteine persulfide.

It belongs to the HCP family. The cofactor is [4Fe-4S] cluster. Requires hybrid [4Fe-2O-2S] cluster as cofactor.

Its subcellular location is the cytoplasm. The enzyme catalyses A + NH4(+) + H2O = hydroxylamine + AH2 + H(+). Its function is as follows. Catalyzes the reduction of hydroxylamine to form NH(3) and H(2)O. The polypeptide is Hydroxylamine reductase (Clostridium botulinum (strain ATCC 19397 / Type A)).